Here is a 663-residue protein sequence, read N- to C-terminus: ATP-dependent RNA helicase DBP6 (663 aa).

2 disordered regions span residues 1–119 and 153–200; these read MFGV…DAME and VHSS…LNSS. 2 stretches are compositionally biased toward acidic residues: residues 39 to 79 and 88 to 101; these read VVDD…NSEG and SESESESESESESD. Composition is skewed to basic and acidic residues over residues 102–111 and 168–177; these read VDGKHMKEEL and GSREKEKEEV. Positions 222–250 match the Q motif motif; that stretch reads KPFSEFPLSPFMHENLESLGFENAFAVQV. Positions 264 to 448 constitute a Helicase ATP-binding domain; that stretch reads KLRPDAFGDV…SLDFHNPRLL (185 aa). An ATP-binding site is contributed by 277–284; sequence ASTGSGKT. The DEAD box signature appears at 384-387; it reads DEAD. The region spanning 485-642 is the Helicase C-terminal domain; it reads ILAKFLIAQE…DVEVNLKQLI (158 aa).

This sequence belongs to the DEAD box helicase family. DDX51/DBP6 subfamily. In terms of assembly, associated with pre-ribosomal particles.

The protein resides in the nucleus. The protein localises to the nucleolus. The enzyme catalyses ATP + H2O = ADP + phosphate + H(+). In terms of biological role, ATP-binding RNA helicase involved in the biogenesis of 60S ribosomal subunits and is required for the normal formation of 25S and 5.8S rRNAs. The polypeptide is ATP-dependent RNA helicase DBP6 (DBP6) (Lodderomyces elongisporus (strain ATCC 11503 / CBS 2605 / JCM 1781 / NBRC 1676 / NRRL YB-4239) (Yeast)).